The chain runs to 233 residues: Small ribosomal subunit protein uS3 (233 aa).

Residues 39 to 107 (VRQFLMKTLE…PVQINISEVR (69 aa)) enclose the KH type-2 domain.

Belongs to the universal ribosomal protein uS3 family. In terms of assembly, part of the 30S ribosomal subunit. Forms a tight complex with proteins S10 and S14.

Its function is as follows. Binds the lower part of the 30S subunit head. Binds mRNA in the 70S ribosome, positioning it for translation. The sequence is that of Small ribosomal subunit protein uS3 from Buchnera aphidicola subsp. Acyrthosiphon pisum (strain 5A).